A 179-amino-acid polypeptide reads, in one-letter code: NADH dehydrogenase [ubiquinone] 1 beta subcomplex subunit 9 (179 aa).

Residue alanine 2 is modified to N-acetylalanine. Position 85 is a phosphoserine (serine 85). The interval glutamate 136–aspartate 162 is disordered.

This sequence belongs to the complex I LYR family. Mammalian complex I is composed of 45 different subunits.

It localises to the mitochondrion inner membrane. Functionally, accessory subunit of the mitochondrial membrane respiratory chain NADH dehydrogenase (Complex I), that is believed to be not involved in catalysis. Complex I functions in the transfer of electrons from NADH to the respiratory chain. The immediate electron acceptor for the enzyme is believed to be ubiquinone. The polypeptide is NADH dehydrogenase [ubiquinone] 1 beta subcomplex subunit 9 (NDUFB9) (Pan troglodytes (Chimpanzee)).